Here is a 688-residue protein sequence, read N- to C-terminus: PTS system glucoside-specific EIICBA component (688 aa).

Positions 3–427 constitute a PTS EIIC type-1 domain; that stretch reads KKLFGQLQRI…FKLKTPGRED (425 aa). A run of 10 helical transmembrane segments spans residues 12-32, 81-101, 137-157, 182-202, 223-243, 284-304, 315-335, 340-360, 364-384, and 395-415; these read IGKALMLPVAILPAAGILLAF, LGLAGGDGVAALAALVGYLIM, LVLGIPTLQTGVFGGIIMGAL, FVPIVTSVVAIATGVLLSFAW, LTTFIFGIIERSLIPFGLHHI, AFTTGKYPFMMFGLPAAAFAI, VVGGLMLSAGLTAFLTGITEP, FLFVAPVLYGIHVLLAGTSFL, LLGVKIGMTFSGGFIDYILYG, and LVIPVGIVYAIVYYFLFDFAI. Positions 438-519 constitute a PTS EIIB type-1 domain; that stretch reads AKLPFDVLDA…AKIMSGEITK (82 aa). The Phosphocysteine intermediate; for EIIB activity role is filled by C460. The 105-residue stretch at 560 to 664 folds into the PTS EIIA type-1 domain; that stretch reads DQVFAGKMMG…SIVTPMIITN (105 aa). Residue H612 is the Tele-phosphohistidine intermediate; for EIIA activity of the active site.

Its subcellular location is the cell membrane. Its function is as follows. The phosphoenolpyruvate-dependent sugar phosphotransferase system (sugar PTS), a major carbohydrate active -transport system, catalyzes the phosphorylation of incoming sugar substrates concomitantly with their translocation across the cell membrane. This system is involved in alpha- and beta-glucoside transport. The protein is PTS system glucoside-specific EIICBA component (glcB) of Staphylococcus aureus (strain Mu3 / ATCC 700698).